Here is a 354-residue protein sequence, read N- to C-terminus: S-adenosylmethionine:tRNA ribosyltransferase-isomerase (354 aa).

This sequence belongs to the QueA family. Monomer.

It localises to the cytoplasm. The enzyme catalyses 7-aminomethyl-7-carbaguanosine(34) in tRNA + S-adenosyl-L-methionine = epoxyqueuosine(34) in tRNA + adenine + L-methionine + 2 H(+). It functions in the pathway tRNA modification; tRNA-queuosine biosynthesis. Functionally, transfers and isomerizes the ribose moiety from AdoMet to the 7-aminomethyl group of 7-deazaguanine (preQ1-tRNA) to give epoxyqueuosine (oQ-tRNA). The chain is S-adenosylmethionine:tRNA ribosyltransferase-isomerase from Klebsiella pneumoniae (strain 342).